The sequence spans 122 residues: UPF0102 protein Rleg2_4331 (122 aa).

Belongs to the UPF0102 family.

This Rhizobium leguminosarum bv. trifolii (strain WSM2304) protein is UPF0102 protein Rleg2_4331.